The following is a 154-amino-acid chain: uncharacterized protein (154 aa).

The protein resides in the mitochondrion. This is an uncharacterized protein from Marchantia polymorpha (Common liverwort).